The following is a 422-amino-acid chain: Adenosylhomocysteinase (422 aa).

Substrate contacts are provided by aspartate 129 and glutamate 154. 155 to 157 (TTT) is a binding site for NAD(+). Positions 184 and 188 each coordinate substrate. Residues asparagine 189, 218–223 (GYGWCG), glutamate 241, asparagine 276, 297–299 (AGH), and asparagine 344 each bind NAD(+).

The protein belongs to the adenosylhomocysteinase family. NAD(+) is required as a cofactor.

The protein resides in the cytoplasm. It catalyses the reaction S-adenosyl-L-homocysteine + H2O = L-homocysteine + adenosine. The protein operates within amino-acid biosynthesis; L-homocysteine biosynthesis; L-homocysteine from S-adenosyl-L-homocysteine: step 1/1. Functionally, may play a key role in the regulation of the intracellular concentration of adenosylhomocysteine. The chain is Adenosylhomocysteinase from Pyrococcus abyssi (strain GE5 / Orsay).